A 503-amino-acid polypeptide reads, in one-letter code: Aromatase (503 aa).

Heme is bound at residue Cys-437.

The protein belongs to the cytochrome P450 family. Heme is required as a cofactor.

It is found in the membrane. It carries out the reaction testosterone + 3 reduced [NADPH--hemoprotein reductase] + 3 O2 = 17beta-estradiol + formate + 3 oxidized [NADPH--hemoprotein reductase] + 4 H2O + 4 H(+). The enzyme catalyses androst-4-ene-3,17-dione + 3 reduced [NADPH--hemoprotein reductase] + 3 O2 = estrone + formate + 3 oxidized [NADPH--hemoprotein reductase] + 4 H2O + 4 H(+). Catalyzes the formation of aromatic C18 estrogens from C19 androgens. The protein is Aromatase (CYP19A1) of Oryctolagus cuniculus (Rabbit).